A 153-amino-acid chain; its full sequence is MGLTSQLLPPLFFLLACAGNFAHGHNCHIALREIIETLNSLTEQKTLCTKLTITDILAASKNTTEKETFCRAATVLRQFYSHHEKDTRCLGATAQQFHRHKQLIRFLKRLDRNLWGLAGLNSCPVKEANQSTLEDFLERLKTIMREKYSKCSS.

The N-terminal stretch at 1 to 24 (MGLTSQLLPPLFFLLACAGNFAHG) is a signal peptide. 3 disulfide bridges follow: Cys27-Cys151, Cys48-Cys89, and Cys70-Cys123. N-linked (GlcNAc...) asparagine glycosylation occurs at Asn62. N-linked (GlcNAc...) asparagine glycosylation occurs at Asn129.

This sequence belongs to the IL-4/IL-13 family.

The protein localises to the secreted. Its function is as follows. Participates in at least several B-cell activation processes as well as of other cell types. It is a costimulator of DNA-synthesis. It induces the expression of class II MHC molecules on resting B-cells. It enhances both secretion and cell surface expression of IgE and IgG1. It also regulates the expression of the low affinity Fc receptor for IgE (CD23) on both lymphocytes and monocytes. Positively regulates IL31RA expression in macrophages. Stimulates autophagy in dendritic cells by interfering with mTORC1 signaling and through the induction of RUFY4. In Macaca mulatta (Rhesus macaque), this protein is Interleukin-4 (IL4).